The following is a 183-amino-acid chain: Mitochondrial inner membrane protease subunit 2 (183 aa).

A helical transmembrane segment spans residues 13–35; it reads AFVSGFFVAVPVTVTVLDRLAYV. Catalysis depends on residues Ser42 and Lys90. The disordered stretch occupies residues 161-183; that stretch reads SVPPDRRPLLNWDRAAEDKYDDD. Residues 164–183 show a composition bias toward basic and acidic residues; sequence PDRRPLLNWDRAAEDKYDDD.

Belongs to the peptidase S26 family. IMP2 subfamily. As to quaternary structure, heterodimer of 2 subunits, IMMPL1 and IMMPL2.

It localises to the mitochondrion inner membrane. Catalyzes the removal of transit peptides required for the targeting of proteins from the mitochondrial matrix, across the inner membrane, into the inter-membrane space. The sequence is that of Mitochondrial inner membrane protease subunit 2 (immp2l) from Danio rerio (Zebrafish).